A 62-amino-acid polypeptide reads, in one-letter code: Small ribosomal subunit protein bS21 (62 aa).

The span at 43–52 (VKKKLKSEAA) shows a compositional bias: basic and acidic residues. Residues 43–62 (VKKKLKSEAARKRKNRRRFK) form a disordered region. The segment covering 53–62 (RKRKNRRRFK) has biased composition (basic residues).

The protein belongs to the bacterial ribosomal protein bS21 family.

The polypeptide is Small ribosomal subunit protein bS21 (Lactiplantibacillus plantarum (strain ATCC BAA-793 / NCIMB 8826 / WCFS1) (Lactobacillus plantarum)).